The following is an 861-amino-acid chain: Protein argonaute-4 (861 aa).

A PAZ domain is found at 219–338 (PIIEFMCEVL…LPLEVCNIVA (120 aa)). In terms of domain architecture, Piwi spans 509–820 (LIVVILPGKT…VAFRARYHLV (312 aa)). The disordered stretch occupies residues 825 to 846 (DSAEGSHVSGQSNGRDPQALAK).

The protein belongs to the argonaute family. Ago subfamily. Interacts with EIF4B, IMP8, PRMT5, TNRC6A and TNRC6B. Interacts with ZFP36. In terms of processing, ubiquitinated on surface-exposed lysines by a SCF-like E3 ubiquitin-protein ligase complex containing ZSWIM8 during target-directed microRNA degradation (TDMD), a process that mediates degradation of microRNAs (miRNAs). Ubiquitination by the SCF-like E3 ubiquitin-protein ligase complex containing ZSWIM8 leads to its subsequent degradation, thereby exposing miRNAs for degradation. ZSWIM8 recognizes and binds AGO4 when it is engaged with a TDMD target.

It localises to the cytoplasm. The protein resides in the P-body. Required for RNA-mediated gene silencing (RNAi). Binds to short RNAs such as microRNAs (miRNAs) and represses the translation of mRNAs which are complementary to them. Lacks endonuclease activity and does not appear to cleave target mRNAs. The protein is Protein argonaute-4 (Ago4) of Mus musculus (Mouse).